Here is a 239-residue protein sequence, read N- to C-terminus: Endonuclease V (239 aa).

Aspartate 48 and aspartate 116 together coordinate Mg(2+).

It belongs to the endonuclease V family. It depends on Mg(2+) as a cofactor.

Its subcellular location is the cytoplasm. The catalysed reaction is Endonucleolytic cleavage at apurinic or apyrimidinic sites to products with a 5'-phosphate.. Functionally, DNA repair enzyme involved in the repair of deaminated bases. Selectively cleaves double-stranded DNA at the second phosphodiester bond 3' to a deoxyinosine leaving behind the intact lesion on the nicked DNA. The chain is Endonuclease V from Xanthomonas oryzae pv. oryzae (strain MAFF 311018).